A 553-amino-acid polypeptide reads, in one-letter code: Thermosome subunit beta (553 aa).

The disordered stretch occupies residues 534–553 (KKSEGKTGEKKESEKGKEED).

This sequence belongs to the TCP-1 chaperonin family. In terms of assembly, forms a Heterooligomeric complex of two stacked eight-membered rings.

Functionally, molecular chaperone; binds unfolded polypeptides in vitro, and has a weak ATPase activity. This Sulfolobus acidocaldarius (strain ATCC 33909 / DSM 639 / JCM 8929 / NBRC 15157 / NCIMB 11770) protein is Thermosome subunit beta (thsB).